The primary structure comprises 115 residues: Holo-[acyl-carrier-protein] synthase (115 aa).

2 residues coordinate Mg(2+): D5 and E51.

Belongs to the P-Pant transferase superfamily. AcpS family. Mg(2+) serves as cofactor.

The protein localises to the cytoplasm. The enzyme catalyses apo-[ACP] + CoA = holo-[ACP] + adenosine 3',5'-bisphosphate + H(+). Functionally, transfers the 4'-phosphopantetheine moiety from coenzyme A to a Ser of acyl-carrier-protein. This Helicobacter acinonychis (strain Sheeba) protein is Holo-[acyl-carrier-protein] synthase.